Consider the following 219-residue polypeptide: Ribosome maturation factor RimP (219 aa).

Disordered regions lie at residues 1-38 (MTQR…LATR) and 189-219 (VEFT…DEER). Residues 198 to 219 (DAFDGTDEAGDFDDDDVEDEER) are compositionally biased toward acidic residues.

This sequence belongs to the RimP family.

It is found in the cytoplasm. In terms of biological role, required for maturation of 30S ribosomal subunits. This is Ribosome maturation factor RimP from Salinispora arenicola (strain CNS-205).